Reading from the N-terminus, the 117-residue chain is UPF0102 protein Rsph17029_0461 (117 aa).

This sequence belongs to the UPF0102 family.

The protein is UPF0102 protein Rsph17029_0461 of Cereibacter sphaeroides (strain ATCC 17029 / ATH 2.4.9) (Rhodobacter sphaeroides).